The chain runs to 154 residues: Large ribosomal subunit protein bL17 (154 aa).

The disordered stretch occupies residues 125 to 154; the sequence is AASQKSSKQDRAKRVQGSKKNVDAVAESAE.

It belongs to the bacterial ribosomal protein bL17 family. Part of the 50S ribosomal subunit. Contacts protein L32.

In Chlorobium chlorochromatii (strain CaD3), this protein is Large ribosomal subunit protein bL17.